The primary structure comprises 108 residues: DNA-binding protein HBbu (108 aa).

It belongs to the bacterial histone-like protein family.

Histone-like DNA-binding protein which is capable of wrapping DNA to stabilize it, and thus to prevent its denaturation under extreme environmental conditions. This is DNA-binding protein HBbu (hbb) from Borreliella japonica (Borrelia japonica).